Here is a 515-residue protein sequence, read N- to C-terminus: Maturase K (515 aa).

The protein belongs to the intron maturase 2 family. MatK subfamily.

It is found in the plastid. Its subcellular location is the chloroplast. In terms of biological role, usually encoded in the trnK tRNA gene intron. Probably assists in splicing its own and other chloroplast group II introns. The sequence is that of Maturase K from Pinus pinea (Italian stone pine).